A 162-amino-acid polypeptide reads, in one-letter code: NADH-quinone oxidoreductase subunit I (162 aa).

4Fe-4S ferredoxin-type domains lie at 54-83 (RRYE…IESE) and 93-122 (TRYD…ETQI). Cys63, Cys66, Cys69, Cys73, Cys102, Cys105, Cys108, and Cys112 together coordinate [4Fe-4S] cluster.

Belongs to the complex I 23 kDa subunit family. As to quaternary structure, NDH-1 is composed of 14 different subunits. Subunits NuoA, H, J, K, L, M, N constitute the membrane sector of the complex. [4Fe-4S] cluster serves as cofactor.

The protein localises to the cell inner membrane. The catalysed reaction is a quinone + NADH + 5 H(+)(in) = a quinol + NAD(+) + 4 H(+)(out). In terms of biological role, NDH-1 shuttles electrons from NADH, via FMN and iron-sulfur (Fe-S) centers, to quinones in the respiratory chain. The immediate electron acceptor for the enzyme in this species is believed to be ubiquinone. Couples the redox reaction to proton translocation (for every two electrons transferred, four hydrogen ions are translocated across the cytoplasmic membrane), and thus conserves the redox energy in a proton gradient. The protein is NADH-quinone oxidoreductase subunit I of Burkholderia pseudomallei (strain 668).